A 236-amino-acid chain; its full sequence is 2,3,4,5-tetrahydropyridine-2,6-dicarboxylate N-acetyltransferase (236 aa).

This sequence belongs to the transferase hexapeptide repeat family. DapH subfamily.

The catalysed reaction is (S)-2,3,4,5-tetrahydrodipicolinate + acetyl-CoA + H2O = L-2-acetamido-6-oxoheptanedioate + CoA. It functions in the pathway amino-acid biosynthesis; L-lysine biosynthesis via DAP pathway; LL-2,6-diaminopimelate from (S)-tetrahydrodipicolinate (acetylase route): step 1/3. Catalyzes the transfer of an acetyl group from acetyl-CoA to tetrahydrodipicolinate. The polypeptide is 2,3,4,5-tetrahydropyridine-2,6-dicarboxylate N-acetyltransferase (Clostridium botulinum (strain Kyoto / Type A2)).